The chain runs to 349 residues: MKAVTVIPSVPESLRLRDVDKPKPNHGQVLLKPIRVGICGTDKEIIEGKYGKAPPGSQYLILGHEALAVVEELGDGVDNVAVGDVVVPTVRRPLDCNLPVDYCPMGHYVEHGIWGLHGHAAEYSVTDAKYLVKVPKELIDVAVLTEPLSVVEKGIDVALSVGGSRFEWRPRSALILGAGPIGLLSTMVLRLMGLLTTTVATRPPDSLKARLVRELGGVYVDSALSSIEGVFDLVVEATGSPQVMVDGLRHLAPNGVMVLLGVYPPGGVINDLGNVLTDSVLNNKVLVGSVNAGVKHFELGLRHMAEAKGRFGDWLSRLITKRATLDNYQEAYSWTHDDIKTVLEINPLN.

Cys39 serves as a coordination point for Zn(2+). Residue Thr41 participates in substrate binding. Residues His64 and Glu65 each contribute to the Zn(2+) site. Residues Glu110 and Glu146 each coordinate substrate. A Zn(2+)-binding site is contributed by Glu146. Residues 178 to 181 (AGPI), 260 to 262 (LGV), and 289 to 291 (SVN) contribute to the NADP(+) site. Residue Asn291 participates in substrate binding.

The protein belongs to the zinc-containing alcohol dehydrogenase family. Glucose 1-dehydrogenase subfamily. Zn(2+) is required as a cofactor.

The catalysed reaction is D-glucose + NAD(+) = D-glucono-1,5-lactone + NADH + H(+). The enzyme catalyses D-glucose + NADP(+) = D-glucono-1,5-lactone + NADPH + H(+). In terms of biological role, catalyzes the NAD(P)(+)-dependent oxidation of D-glucose to D-gluconate via gluconolactone. Can utilize both NAD(+) and NADP(+) as electron acceptor. Is involved in the degradation of glucose through a non-phosphorylative variant of the Entner-Doudoroff pathway. The sequence is that of Glucose 1-dehydrogenase 1 from Caldivirga maquilingensis (strain ATCC 700844 / DSM 13496 / JCM 10307 / IC-167).